Here is a 326-residue protein sequence, read N- to C-terminus: N-acetyl-gamma-glutamyl-phosphate reductase (326 aa).

The active site involves cysteine 155.

This sequence belongs to the NAGSA dehydrogenase family. Type 1 subfamily.

The protein localises to the cytoplasm. The enzyme catalyses N-acetyl-L-glutamate 5-semialdehyde + phosphate + NADP(+) = N-acetyl-L-glutamyl 5-phosphate + NADPH + H(+). Its pathway is amino-acid biosynthesis; L-arginine biosynthesis; N(2)-acetyl-L-ornithine from L-glutamate: step 3/4. Functionally, catalyzes the NADPH-dependent reduction of N-acetyl-5-glutamyl phosphate to yield N-acetyl-L-glutamate 5-semialdehyde. This Shewanella sediminis (strain HAW-EB3) protein is N-acetyl-gamma-glutamyl-phosphate reductase.